The chain runs to 202 residues: Matrix protein (202 aa).

The tract at residues 1–33 is disordered; that stretch reads MNILRKIVKNRKDEDTQKPSPASAPPDDDDLWL. A PPXY motif motif is present at residues 35–38; sequence PPEY. The essential for glycoprotein binding stretch occupies residues 115–151; sequence KLRRTLIFQWADSRGPLEGEELEHSQEITWDDDTEFV.

Belongs to the lyssavirus matrix protein family. Homomultimer. Interacts with nucleoprotein and with the cytoplasmic domain of glycoprotein. Interacts with host ATP6V1A; this interaction plays an important role in virion uncoating after viral entry.

Its subcellular location is the virion membrane. It is found in the host endomembrane system. It localises to the host cytoplasm. Functionally, plays a major role in assembly, budding and uncoating of virion after membrane fusion. Completely covers the ribonucleoprotein coil and keep it in condensed bullet-shaped form. Inhibits viral transcription and stimulates replication. Plays a major role in early induction of TRAIL-mediated apoptosis in infected neurons. Inhibits the integrated stress response (ISR) in the infected cell by blocking the formation of stress granules. The chain is Matrix protein (M) from Homo sapiens (Human).